Consider the following 505-residue polypeptide: 2,3-bisphosphoglycerate-independent phosphoglycerate mutase (505 aa).

2 residues coordinate Mn(2+): aspartate 13 and serine 63. The active-site Phosphoserine intermediate is serine 63. Residues histidine 124, 153–154 (RD), arginine 183, arginine 189, 254–257 (RADR), and lysine 330 each bind substrate. Residues aspartate 396, histidine 400, aspartate 437, histidine 438, and histidine 456 each contribute to the Mn(2+) site.

It belongs to the BPG-independent phosphoglycerate mutase family. Monomer. Mn(2+) serves as cofactor.

It carries out the reaction (2R)-2-phosphoglycerate = (2R)-3-phosphoglycerate. The protein operates within carbohydrate degradation; glycolysis; pyruvate from D-glyceraldehyde 3-phosphate: step 3/5. Its function is as follows. Catalyzes the interconversion of 2-phosphoglycerate and 3-phosphoglycerate. This chain is 2,3-bisphosphoglycerate-independent phosphoglycerate mutase, found in Ruegeria pomeroyi (strain ATCC 700808 / DSM 15171 / DSS-3) (Silicibacter pomeroyi).